We begin with the raw amino-acid sequence, 238 residues long: Cysteine-rich venom protein pseudechetoxin-like (238 aa).

The N-terminal stretch at 1–19 is a signal peptide; that stretch reads MIAFTVLLSLAAVLQQSSG. Residues 20–28 constitute a propeptide that is removed on maturation; it reads TVDFASESS. The SCP domain maps to 38-164; that stretch reads VDKHNDLRRS…STKYLYVCQY (127 aa). 8 disulfides stabilise this stretch: C75–C153, C92–C165, C148–C162, C184–C191, C187–C196, C200–C233, C209–C227, and C218–C231. Residues 200–233 form the ShKT domain; that stretch reads CKHNNDFSNCKALAKKSKCQTEWIKSKCPATCFC.

This sequence belongs to the CRISP family. Expressed by the venom gland.

Its subcellular location is the secreted. Blocks olfactory (CNGA2) and retinal (CNGA1) CNG channel currents. Does not affect neither depolarization- nor caffeine-induced contraction of smooth muscle. The polypeptide is Cysteine-rich venom protein pseudechetoxin-like (Oxyuranus scutellatus scutellatus (Australian taipan)).